The sequence spans 347 residues: Anthranilate phosphoribosyltransferase (347 aa).

5-phospho-alpha-D-ribose 1-diphosphate-binding positions include G86, 89–90 (GD), T94, 96–99 (NIST), 114–122 (KHGNRSVSS), and S126. G86 provides a ligand contact to anthranilate. Mg(2+) is bound at residue S98. Residue N117 coordinates anthranilate. R172 lines the anthranilate pocket. The Mg(2+) site is built by D230 and E231.

It belongs to the anthranilate phosphoribosyltransferase family. Homodimer. Mg(2+) serves as cofactor.

The catalysed reaction is N-(5-phospho-beta-D-ribosyl)anthranilate + diphosphate = 5-phospho-alpha-D-ribose 1-diphosphate + anthranilate. Its pathway is amino-acid biosynthesis; L-tryptophan biosynthesis; L-tryptophan from chorismate: step 2/5. In terms of biological role, catalyzes the transfer of the phosphoribosyl group of 5-phosphorylribose-1-pyrophosphate (PRPP) to anthranilate to yield N-(5'-phosphoribosyl)-anthranilate (PRA). This Shewanella frigidimarina (strain NCIMB 400) protein is Anthranilate phosphoribosyltransferase.